Reading from the N-terminus, the 292-residue chain is MAKKIKQIAIYGKGGIGKSTTTSNISAALSVAGYKVMQFGCDPKSDSTNTLRGGEYIPTVLDTLRDKQIVRAHDVIFEGFNGIYCVEAGGPAPGVGCAGRGIITSVSLLKQQKVFEELDLDYVIYDVLGDVVCGGFAVPVREGIAEHVFTVTSADFMALYAANNLFKGIHKYSTEGGALLGGVIANSINAPYAKEIVDDFVARTHTQVMEYVPRSVSVTQAELQGKTTIEADPNSKQAQIYKSLAQKIVDHTESKVPVPLETSELREWASNWGKQLVELEAGVLSPAAAGNL.

12–19 (GKGGIGKS) is an ATP binding site. Cys97 contributes to the [4Fe-4S] cluster binding site. ADP-ribosylarginine; by dinitrogenase reductase ADP-ribosyltransferase is present on Arg100. Position 133 (Cys133) interacts with [4Fe-4S] cluster.

The protein belongs to the NifH/BchL/ChlL family. Homodimer. Requires [4Fe-4S] cluster as cofactor. Post-translationally, the reversible ADP-ribosylation of Arg-100 inactivates the nitrogenase reductase and regulates nitrogenase activity.

It carries out the reaction N2 + 8 reduced [2Fe-2S]-[ferredoxin] + 16 ATP + 16 H2O = H2 + 8 oxidized [2Fe-2S]-[ferredoxin] + 2 NH4(+) + 16 ADP + 16 phosphate + 6 H(+). In terms of biological role, the key enzymatic reactions in nitrogen fixation are catalyzed by the nitrogenase complex, which has 2 components: the iron protein and the molybdenum-iron protein. This Paenibacillus durus (Paenibacillus azotofixans) protein is Nitrogenase iron protein 2 (nifH2).